Consider the following 1163-residue polypeptide: Carbamoyl phosphate synthase large chain (1163 aa).

The carboxyphosphate synthetic domain stretch occupies residues 1-456 (MPKRQDIKSI…SLQKALRGLE (456 aa)). ATP is bound at residue R129. Residues 148 to 170 (LANATDIKDHDRKSHEAERSALK) form a disordered region. Residues 153-170 (DIKDHDRKSHEAERSALK) are compositionally biased toward basic and acidic residues. The 197-residue stretch at 185–381 (LENQWNLGEG…IAKIAAKLAV (197 aa)) folds into the ATP-grasp 1 domain. Residues R222, G228, G229, E261, V263, E268, G294, V295, H296, Q338, and E352 each coordinate ATP. Mg(2+) contacts are provided by Q338, E352, and N354. Residues Q338, E352, and N354 each contribute to the Mn(2+) site. The tract at residues 457–614 (TGLTGLDEIE…PFVGAARSEA (158 aa)) is oligomerization domain. The carbamoyl phosphate synthetic domain stretch occupies residues 615–1026 (QVSDRKKVVI…AFAKSQLGAG (412 aa)). The region spanning 743 to 955 (QKLLMKLDLN…IAKIAARVMA (213 aa)) is the ATP-grasp 2 domain. ATP is bound by residues R779, S839, L841, E846, G871, I872, H873, S874, Q914, and E926. 3 residues coordinate Mg(2+): Q914, E926, and N928. 3 residues coordinate Mn(2+): Q914, E926, and N928. In terms of domain architecture, MGS-like spans 1027 to 1163 (VDLPRDGTVF…VRPLQSYFET (137 aa)). An allosteric domain region spans residues 1027 to 1163 (VDLPRDGTVF…VRPLQSYFET (137 aa)).

The protein belongs to the CarB family. Composed of two chains; the small (or glutamine) chain promotes the hydrolysis of glutamine to ammonia, which is used by the large (or ammonia) chain to synthesize carbamoyl phosphate. Tetramer of heterodimers (alpha,beta)4. Mg(2+) serves as cofactor. The cofactor is Mn(2+).

The catalysed reaction is hydrogencarbonate + L-glutamine + 2 ATP + H2O = carbamoyl phosphate + L-glutamate + 2 ADP + phosphate + 2 H(+). The enzyme catalyses hydrogencarbonate + NH4(+) + 2 ATP = carbamoyl phosphate + 2 ADP + phosphate + 2 H(+). It participates in amino-acid biosynthesis; L-arginine biosynthesis; carbamoyl phosphate from bicarbonate: step 1/1. It functions in the pathway pyrimidine metabolism; UMP biosynthesis via de novo pathway; (S)-dihydroorotate from bicarbonate: step 1/3. In terms of biological role, large subunit of the glutamine-dependent carbamoyl phosphate synthetase (CPSase). CPSase catalyzes the formation of carbamoyl phosphate from the ammonia moiety of glutamine, carbonate, and phosphate donated by ATP, constituting the first step of 2 biosynthetic pathways, one leading to arginine and/or urea and the other to pyrimidine nucleotides. The large subunit (synthetase) binds the substrates ammonia (free or transferred from glutamine from the small subunit), hydrogencarbonate and ATP and carries out an ATP-coupled ligase reaction, activating hydrogencarbonate by forming carboxy phosphate which reacts with ammonia to form carbamoyl phosphate. The chain is Carbamoyl phosphate synthase large chain from Rhizobium meliloti (strain 1021) (Ensifer meliloti).